The primary structure comprises 312 residues: Ribosomal protein L11 methyltransferase (312 aa).

Residues threonine 160, glycine 181, aspartate 203, and asparagine 246 each contribute to the S-adenosyl-L-methionine site.

It belongs to the methyltransferase superfamily. PrmA family.

It is found in the cytoplasm. It catalyses the reaction L-lysyl-[protein] + 3 S-adenosyl-L-methionine = N(6),N(6),N(6)-trimethyl-L-lysyl-[protein] + 3 S-adenosyl-L-homocysteine + 3 H(+). Its function is as follows. Methylates ribosomal protein L11. The polypeptide is Ribosomal protein L11 methyltransferase (Staphylococcus aureus (strain MRSA252)).